A 436-amino-acid chain; its full sequence is UPF0597 protein DP0591 (436 aa).

This sequence belongs to the UPF0597 family.

The chain is UPF0597 protein DP0591 from Desulfotalea psychrophila (strain LSv54 / DSM 12343).